A 223-amino-acid polypeptide reads, in one-letter code: uncharacterized protein (223 aa).

The next 7 membrane-spanning stretches (helical) occupy residues T25–A45, I46–F66, L78–F98, G105–A125, F140–S160, T161–F181, and I199–M219.

This sequence belongs to the BI1 family.

It localises to the cell membrane. This is an uncharacterized protein from Vibrio cholerae serotype O1 (strain ATCC 39315 / El Tor Inaba N16961).